The following is a 251-amino-acid chain: Hydroxyacylglutathione hydrolase (251 aa).

7 residues coordinate Zn(2+): His53, His55, Asp57, His58, His110, Asp127, and His165.

It belongs to the metallo-beta-lactamase superfamily. Glyoxalase II family. Monomer. Zn(2+) is required as a cofactor.

The catalysed reaction is an S-(2-hydroxyacyl)glutathione + H2O = a 2-hydroxy carboxylate + glutathione + H(+). It participates in secondary metabolite metabolism; methylglyoxal degradation; (R)-lactate from methylglyoxal: step 2/2. Thiolesterase that catalyzes the hydrolysis of S-D-lactoyl-glutathione to form glutathione and D-lactic acid. This chain is Hydroxyacylglutathione hydrolase, found in Edwardsiella ictaluri (strain 93-146).